Consider the following 303-residue polypeptide: Glutathione transport system permease protein GsiD (303 aa).

The next 6 helical transmembrane spans lie at 40–60 (AMTAALFVILLIVVAIFARWI), 105–125 (LAAGVFAVFIGAAIGTLLGLL), 144–164 (LFAFPGILLAIAVVAVLGSGI), 165–185 (ANVIIAVAIFSIPAFARLVRG), 222–242 (IVVFFTMRIGTSIISAASLSF), and 266–286 (VIAPHVAVFPALAIFLTVLAF). One can recognise an ABC transmembrane type-1 domain in the interval 101–290 (AQISLAAGVF…LTVLAFNLLG (190 aa)).

Belongs to the binding-protein-dependent transport system permease family. As to quaternary structure, the complex is composed of two ATP-binding proteins (GsiA), two transmembrane proteins (GsiC and GsiD) and a solute-binding protein (GsiB).

The protein localises to the cell inner membrane. Functionally, part of the ABC transporter complex GsiABCD involved in glutathione import. Probably responsible for the translocation of the substrate across the membrane. The chain is Glutathione transport system permease protein GsiD from Escherichia coli O157:H7.